The sequence spans 631 residues: Probable basic-leucine zipper transcription factor F (631 aa).

Residues 35-62 (KKNANVFNNFQQQQQQIQQQNKQSNGLI) are a coiled coil. Disordered regions lie at residues 46-117 (QQQQ…HNNI), 154-207 (LNNS…NNQF), and 264-406 (MLNV…ERHQ). Composition is skewed to low complexity over residues 155 to 206 (NNSY…NNNQ) and 271 to 360 (NNAN…GSNN). A coiled-coil region spans residues 328 to 366 (NNNNNNSNNISTQINNLNNNINNQNNQLNGSNNGKKKEE). Residues 405–468 (HQKRQRRLVK…KLIREQLLYL (64 aa)) enclose the bZIP domain. The tract at residues 407–427 (KRQRRLVKNREAAQLFRQRQK) is basic motif. The segment at 433-440 (LEKKVSDL) is leucine-zipper. The segment at 546 to 631 (QGNLLGTPIP…PPQQSTPNQR (86 aa)) is disordered. Low complexity-rich tracts occupy residues 563–609 (SNSG…PNSS) and 618–631 (PQNTPPQQSTPNQR).

Belongs to the bZIP family.

It localises to the nucleus. Functionally, probable transcriptional regulator. This chain is Probable basic-leucine zipper transcription factor F (bzpF), found in Dictyostelium discoideum (Social amoeba).